The chain runs to 667 residues: Probable Na(+)/H(+) antiporter nhx-9 (667 aa).

Transmembrane regions (helical) follow at residues Val41 to Met61, Leu73 to Ala93, Ser97 to Pro117, Val128 to Leu148, Ile165 to Glu185, Phe192 to Tyr212, Leu236 to Ala256, and Ile268 to Val288. Residue Asn310 is glycosylated (N-linked (GlcNAc...) asparagine). Helical transmembrane passes span Met325–Ser345, Leu351–Val371, Phe390–Pro410, and Met418–Ile438. Residues Thr637–Val667 form a disordered region. At Thr644 the chain carries Phosphothreonine.

The protein belongs to the monovalent cation:proton antiporter 1 (CPA1) transporter (TC 2.A.36) family. In terms of processing, phosphorylated. In early stage larva, expressed in the twin excretory cell processes. At later larval stages, expression is more restricted, resulting in a 'beads on a chain' appearance.

It localises to the cell membrane. Serves some physiological function other than regulation of cellular pH. The protein is Probable Na(+)/H(+) antiporter nhx-9 (nhx-9) of Caenorhabditis elegans.